The chain runs to 189 residues: MIVALKGNIEKKEPTRLWLEVGGVTYEIFISIHTSAALGEKEARLLITHLIREEAWSLYGFAEEAEKRVFDTLIKINGVGPKAALAILSTYTPPTFAQIIQAQDVKALQRVPGIGPKSAGRIMVELAGFSLSLQEGSKASTPPVFEESRLALESLGFKSELIAKALQNIQATTTQEIIKEALKKLQTLR.

The domain I stretch occupies residues 1–62 (MIVALKGNIE…EEAWSLYGFA (62 aa)). Residues 63-138 (EEAEKRVFDT…FSLSLQEGSK (76 aa)) form a domain II region. The tract at residues 138 to 139 (KA) is flexible linker. The tract at residues 140 to 189 (STPPVFEESRLALESLGFKSELIAKALQNIQATTTQEIIKEALKKLQTLR) is domain III.

This sequence belongs to the RuvA family. As to quaternary structure, homotetramer. Forms an RuvA(8)-RuvB(12)-Holliday junction (HJ) complex. HJ DNA is sandwiched between 2 RuvA tetramers; dsDNA enters through RuvA and exits via RuvB. An RuvB hexamer assembles on each DNA strand where it exits the tetramer. Each RuvB hexamer is contacted by two RuvA subunits (via domain III) on 2 adjacent RuvB subunits; this complex drives branch migration. In the full resolvosome a probable DNA-RuvA(4)-RuvB(12)-RuvC(2) complex forms which resolves the HJ.

It localises to the cytoplasm. The RuvA-RuvB-RuvC complex processes Holliday junction (HJ) DNA during genetic recombination and DNA repair, while the RuvA-RuvB complex plays an important role in the rescue of blocked DNA replication forks via replication fork reversal (RFR). RuvA specifically binds to HJ cruciform DNA, conferring on it an open structure. The RuvB hexamer acts as an ATP-dependent pump, pulling dsDNA into and through the RuvAB complex. HJ branch migration allows RuvC to scan DNA until it finds its consensus sequence, where it cleaves and resolves the cruciform DNA. The chain is Holliday junction branch migration complex subunit RuvA from Wolinella succinogenes (strain ATCC 29543 / DSM 1740 / CCUG 13145 / JCM 31913 / LMG 7466 / NCTC 11488 / FDC 602W) (Vibrio succinogenes).